The sequence spans 294 residues: Oligopeptide transport system permease protein OppC (294 aa).

The next 6 helical transmembrane spans lie at 27-47, 94-114, 127-147, 151-171, 202-224, and 260-280; these read MISTIFLVAVFLIVYIYSMFL, IAFAVTLITLVVGNILGVITG, FTDFVMILPSMMIIIVFVTII, NSWSLIGIISIFSWIGTTRLI, IWPNLSTLVIAEATLVFAGNIGL, and WTWVPATVVILIVVLAIIFIG. Residues 88-280 form the ABC transmembrane type-1 domain; the sequence is ARNSFNIAFA…IVVLAIIFIG (193 aa).

Belongs to the binding-protein-dependent transport system permease family. OppBC subfamily. The complex is composed of two ATP-binding proteins (OppD and OppF), two transmembrane proteins (OppB and OppC) and a solute-binding protein (OppA).

The protein resides in the cell membrane. In terms of biological role, part of the ABC transporter complex OppABCDF involved in the uptake of oligopeptides. Probably responsible for the translocation of the substrate across the membrane. This is Oligopeptide transport system permease protein OppC from Lactococcus lactis subsp. cremoris (strain SK11).